The chain runs to 477 residues: Methylenetetrahydrofolate--tRNA-(uracil-5-)-methyltransferase TrmFO (477 aa).

15–20 (GAGLAG) provides a ligand contact to FAD.

The protein belongs to the MnmG family. TrmFO subfamily. It depends on FAD as a cofactor.

It localises to the cytoplasm. It carries out the reaction uridine(54) in tRNA + (6R)-5,10-methylene-5,6,7,8-tetrahydrofolate + NADH + H(+) = 5-methyluridine(54) in tRNA + (6S)-5,6,7,8-tetrahydrofolate + NAD(+). The enzyme catalyses uridine(54) in tRNA + (6R)-5,10-methylene-5,6,7,8-tetrahydrofolate + NADPH + H(+) = 5-methyluridine(54) in tRNA + (6S)-5,6,7,8-tetrahydrofolate + NADP(+). Catalyzes the folate-dependent formation of 5-methyl-uridine at position 54 (M-5-U54) in all tRNAs. The polypeptide is Methylenetetrahydrofolate--tRNA-(uracil-5-)-methyltransferase TrmFO (Rhodopseudomonas palustris (strain BisB5)).